Here is a 941-residue protein sequence, read N- to C-terminus: MEGRQEDQMNRQEEVEQSNNYDRSVDHARTGRSSWIDNSEINSKWIPQHSLQLEMNNIEGEGSVRENDEEEEEIVVLDPEHPLMKRFQTALKNNFTNQLERLNLDLCEKVVVEKAEAQRRHDLAEEVYMVQEMLARLQASLEVCQETNSEAAAQHRQAEDHLYVVKNQYQDTASQTNVQRLQVLELQSKVDNLALKLLYMQEAKSDLCSDIKAIINASNKAQKERTQTEEQKHQQDIYVERLTNRVEKLLEQISLYDLQLISQTEQTRAAKDSLSEAQLELDSVIVEHRQLLQQWKSSLLMMKRRDEAYTAMQEELRQANDQMLSLDTEIESYKKSITQEEEQNECLTLRLNRGQTDCTTSRKLITHSQNLQEVLQAQLSTYTRILQETENTLSTLHGNLEMHQSALKALRKQMEKVSAVRLDLESQIMNKLQEQLTHNNAAKYSRRMNDKTAVYRREKEAQLIKFENDFNTVTLEGQELATHLDSLLAFQAELEQKSTQRHLLLSSREEEIVKQITDIERKQATISIYNKKIKDIVSSTGHEDLGPLEIHAATLSKELEEVGAKIKECQQLWLWQQGELVRFTQEKQAHSSSVQILQTQLTILQQGKIRRESEMEQDQSELADLDKQIKVLMADMVKLNSLLNKNSDLNHALQQSSNLMETEFRQRLKEAEKDSAETQLKLERLNEEKERLINSLVEAERQVMLWGKRTQLMQETCSAIDSDIGQGDIRTMRAEIHRMEVRYAQLMKQQERLLRDMESVVAKSKTIAVWSEAQARTQAHKQPTHNDYHNTIQSLRRKILQTKKQTEECDGVIAQLEERLGSMTSRLQDKQMHLNNIQNTEAFLSQDLRRLQEIKERNLYRLPVLQTRAKHLHAVKEGRYTPMATGVTALELGTHKQEERLKMVSLTLQRLAQEYPQHHSTLHRMNSILAEHLHGECPNSQ.

Positions 1-14 (MEGRQEDQMNRQEE) are enriched in basic and acidic residues. The tract at residues 1–31 (MEGRQEDQMNRQEEVEQSNNYDRSVDHARTG) is disordered. 6 coiled-coil regions span residues 130-154 (VQEM…AAAQ), 210-430 (DIKA…QIMN), 548-572 (LEIH…CQQL), 609-765 (IRRE…AKSK), 814-856 (AQLE…EIKE), and 895-915 (HKQE…AQEY).

The protein belongs to the CCDC40 family. As to expression, expressed in tissues that contain motile cilia, including Kupffer's vesicle, the floorplate, the pronephric tubules and the otic vesicle.

It localises to the cytoplasm. The protein resides in the cell projection. It is found in the cilium. Its function is as follows. Required for assembly of dynein regulatory complex (DRC) and inner dynein arm (IDA) complexes, which are responsible for ciliary beat regulation, thereby playing a central role in motility in cilia and flagella. Probably acts together with ccdc39 to form a molecular ruler that determines the 96 nanometer (nm) repeat length and arrangements of components in cilia and flagella. This Danio rerio (Zebrafish) protein is Coiled-coil domain-containing protein 40 (ccdc40).